The chain runs to 421 residues: tRNA (guanine(37)-N(1))-methyltransferase (421 aa).

S-adenosyl-L-methionine contacts are provided by residues R198, 242-243, 270-271, and N293; these read DL and DA.

The protein belongs to the class I-like SAM-binding methyltransferase superfamily. TRM5/TYW2 family. In terms of assembly, monomer.

The protein localises to the mitochondrion matrix. The protein resides in the nucleus. It localises to the cytoplasm. It catalyses the reaction guanosine(37) in tRNA + S-adenosyl-L-methionine = N(1)-methylguanosine(37) in tRNA + S-adenosyl-L-homocysteine + H(+). Its function is as follows. Specifically methylates the N1 position of guanosine-37 in various cytoplasmic and mitochondrial tRNAs. Methylation is not dependent on the nature of the nucleoside 5' of the target nucleoside. This is the first step in the biosynthesis of wybutosine (yW), a modified base adjacent to the anticodon of tRNAs and required for accurate decoding. The chain is tRNA (guanine(37)-N(1))-methyltransferase from Paramecium tetraurelia.